The sequence spans 347 residues: Phosphate acyltransferase (347 aa).

It belongs to the PlsX family. As to quaternary structure, homodimer. Probably interacts with PlsY.

The protein resides in the cytoplasm. The catalysed reaction is a fatty acyl-[ACP] + phosphate = an acyl phosphate + holo-[ACP]. It functions in the pathway lipid metabolism; phospholipid metabolism. In terms of biological role, catalyzes the reversible formation of acyl-phosphate (acyl-PO(4)) from acyl-[acyl-carrier-protein] (acyl-ACP). This enzyme utilizes acyl-ACP as fatty acyl donor, but not acyl-CoA. In Rhizobium meliloti (strain 1021) (Ensifer meliloti), this protein is Phosphate acyltransferase.